We begin with the raw amino-acid sequence, 419 residues long: Alpha-galactosidase A (419 aa).

Positions 1–31 are cleaved as a signal peptide; that stretch reads MKLLSRDTRLVCELALCPLALVFWSILGVRA. Disulfide bonds link Cys-52-Cys-94 and Cys-56-Cys-63. Residue Asn-139 is glycosylated (N-linked (GlcNAc...) asparagine). Residues Cys-142 and Cys-172 are joined by a disulfide bond. The Nucleophile role is filled by Asp-170. Position 186 is a phosphotyrosine (Tyr-186). N-linked (GlcNAc...) asparagine glycosylation is present at Asn-192. Residues Cys-202 and Cys-223 are joined by a disulfide bond. 203–207 lines the substrate pocket; sequence EWPLY. N-linked (GlcNAc...) asparagine glycosylation is present at Asn-215. The active-site Proton donor is the Asp-231. Cys-378 and Cys-382 form a disulfide bridge.

The protein belongs to the glycosyl hydrolase 27 family. In terms of assembly, homodimer.

Its subcellular location is the lysosome. The catalysed reaction is Hydrolysis of terminal, non-reducing alpha-D-galactose residues in alpha-D-galactosides, including galactose oligosaccharides, galactomannans and galactolipids.. It carries out the reaction a globoside Gb3Cer (d18:1(4E)) + H2O = a beta-D-Gal-(1-&gt;4)-beta-D-Glc-(1&lt;-&gt;1)-Cer(d18:1(4E)) + D-galactose. The enzyme catalyses a globoside Gb3Cer + H2O = a beta-D-galactosyl-(1-&gt;4)-beta-D-glucosyl-(1&lt;-&gt;1)-ceramide + D-galactose. Galactosylgalactosylglucosylceramidase activity is stimulated by saposin B and ammonium chloride. Functionally, catalyzes the hydrolysis of glycosphingolipids and participates in their degradation in the lysosome. The sequence is that of Alpha-galactosidase A from Mus musculus (Mouse).